The following is a 181-amino-acid chain: MSVLSVYHESRPEQPLKVLTHLEDIAATLAEVGVQLERWDASAPVAAGASQEDVIAAYRPQIDRLMAERGYVTVDVISVSRDHPQKDELRAKFLDEHRHAEDEVRFFVAGRGLFTLHIEDMVYAVLCEKNDLISVPAGTRHWFDMGEQPSFVAIRLFNNPDGWTAQFTGERIADQFPRLDD.

Fe(2+) is bound by residues His97, His99, Glu103, and His141. Ni(2+) contacts are provided by His97, His99, Glu103, and His141.

Belongs to the acireductone dioxygenase (ARD) family. Monomer. Requires Fe(2+) as cofactor. The cofactor is Ni(2+).

The catalysed reaction is 1,2-dihydroxy-5-(methylsulfanyl)pent-1-en-3-one + O2 = 3-(methylsulfanyl)propanoate + CO + formate + 2 H(+). It catalyses the reaction 1,2-dihydroxy-5-(methylsulfanyl)pent-1-en-3-one + O2 = 4-methylsulfanyl-2-oxobutanoate + formate + 2 H(+). It functions in the pathway amino-acid biosynthesis; L-methionine biosynthesis via salvage pathway; L-methionine from S-methyl-5-thio-alpha-D-ribose 1-phosphate: step 5/6. Its function is as follows. Catalyzes 2 different reactions between oxygen and the acireductone 1,2-dihydroxy-3-keto-5-methylthiopentene (DHK-MTPene) depending upon the metal bound in the active site. Fe-containing acireductone dioxygenase (Fe-ARD) produces formate and 2-keto-4-methylthiobutyrate (KMTB), the alpha-ketoacid precursor of methionine in the methionine recycle pathway. Ni-containing acireductone dioxygenase (Ni-ARD) produces methylthiopropionate, carbon monoxide and formate, and does not lie on the methionine recycle pathway. This is Acireductone dioxygenase from Stutzerimonas stutzeri (strain A1501) (Pseudomonas stutzeri).